Reading from the N-terminus, the 682-residue chain is Serine/threonine-protein kinase PLK2 (682 aa).

A disordered region spans residues 25–67; the sequence is ACGGDSKKKRPQQPSEDGQPQAQVTPAAPHHHHHHSHSGPEIS. Over residues 36–48 the composition is skewed to polar residues; sequence QQPSEDGQPQAQV. One can recognise a Protein kinase domain in the interval 79–331; sequence YCRGKVLGKG…LDDIIRHDFF (253 aa). ATP is bound by residues 85–93 and lysine 108; that span reads LGKGGFAKC. The active-site Proton acceptor is aspartate 202. Residue threonine 236 is modified to Phosphothreonine. Residues 403 to 432 form a disordered region; it reads SITQQPSKHRADEEPQPPPTTVARSGTSAV. 2 POLO box domains span residues 500 to 578 and 598 to 682; these read WVTK…YMEE and YLLQ…QRCN.

The protein belongs to the protein kinase superfamily. Ser/Thr protein kinase family. CDC5/Polo subfamily. Interacts with NSF; causing NSF dissociation from GRIA2. Interacts with CIB1. In terms of processing, catalytic activity is enhanced by phosphorylation of Thr-236. As to expression, brain, lung and heart.

It localises to the cytoplasm. It is found in the cytoskeleton. Its subcellular location is the microtubule organizing center. The protein localises to the centrosome. The protein resides in the centriole. It localises to the cell projection. It is found in the dendrite. It catalyses the reaction L-seryl-[protein] + ATP = O-phospho-L-seryl-[protein] + ADP + H(+). It carries out the reaction L-threonyl-[protein] + ATP = O-phospho-L-threonyl-[protein] + ADP + H(+). With respect to regulation, activated by phosphorylation of Thr-236. Once activated, activity is stimulated by binding target proteins. In terms of biological role, tumor suppressor serine/threonine-protein kinase involved in synaptic plasticity, centriole duplication and G1/S phase transition. Polo-like kinases act by binding and phosphorylating proteins that are already phosphorylated on a specific motif recognized by the POLO box domains. Phosphorylates CPAP, NPM1, RAPGEF2, RASGRF1, SNCA, SIPA1L1 and SYNGAP1. Plays a key role in synaptic plasticity and memory by regulating the Ras and Rap protein signaling: required for overactivity-dependent spine remodeling by phosphorylating the Ras activator RASGRF1 and the Rap inhibitor SIPA1L1 leading to their degradation by the proteasome. Conversely, phosphorylates the Rap activator RAPGEF2 and the Ras inhibitor SYNGAP1, promoting their activity. Also regulates synaptic plasticity independently of kinase activity, via its interaction with NSF that disrupts the interaction between NSF and the GRIA2 subunit of AMPARs, leading to a rapid rundown of AMPAR-mediated current that occludes long term depression. Required for procentriole formation and centriole duplication by phosphorylating CPAP and NPM1, respectively. Its induction by p53/TP53 suggests that it may participate in the mitotic checkpoint following stress. The sequence is that of Serine/threonine-protein kinase PLK2 (Plk2) from Mus musculus (Mouse).